Here is a 907-residue protein sequence, read N- to C-terminus: Alanine--tRNA ligase (907 aa).

H602, H606, C706, and H710 together coordinate Zn(2+).

It belongs to the class-II aminoacyl-tRNA synthetase family. Zn(2+) serves as cofactor.

It is found in the cytoplasm. It catalyses the reaction tRNA(Ala) + L-alanine + ATP = L-alanyl-tRNA(Ala) + AMP + diphosphate. Functionally, catalyzes the attachment of alanine to tRNA(Ala) in a two-step reaction: alanine is first activated by ATP to form Ala-AMP and then transferred to the acceptor end of tRNA(Ala). Also edits incorrectly charged Ser-tRNA(Ala) and Gly-tRNA(Ala) via its editing domain. The protein is Alanine--tRNA ligase of Thermofilum pendens (strain DSM 2475 / Hrk 5).